Here is a 312-residue protein sequence, read N- to C-terminus: MEIAVFGGGAWGRALAFAFGEKNEVKIISRRDLNEPLKKLNGALISKGSAPIEQVDLQRGLKAALYVIAISVQHLREWFQNASLPKNAKVLIASKGIEVLNRAFVSEIAKDFIDPNSLCFLAGPSFAAEIIQGLPCALVIHSNNQALALEFANKTPSFIRAYAQQDIIGGEIAGAYKNVIAIAGGVCDGLKLGNSAKASLLSRGLVEMQRFGAFFGGKTETFLGLSGAGDLFLTANSILSRNYRVGLGLAQNKPLEVVLEELGEVAEGVKTTNAIVEIARKYGIYTPIASELALLLKGKSVLESMNDLIRRA.

NADPH contacts are provided by W11, R30, R31, and K95. Sn-glycerol 3-phosphate-binding residues include K95, G123, and S125. Residue A127 participates in NADPH binding. Sn-glycerol 3-phosphate contacts are provided by K177, D230, S240, R241, and N242. K177 functions as the Proton acceptor in the catalytic mechanism. R241 contacts NADPH. NADPH is bound by residues V265 and E267.

Belongs to the NAD-dependent glycerol-3-phosphate dehydrogenase family.

The protein resides in the cytoplasm. It carries out the reaction sn-glycerol 3-phosphate + NAD(+) = dihydroxyacetone phosphate + NADH + H(+). It catalyses the reaction sn-glycerol 3-phosphate + NADP(+) = dihydroxyacetone phosphate + NADPH + H(+). It participates in membrane lipid metabolism; glycerophospholipid metabolism. In terms of biological role, catalyzes the reduction of the glycolytic intermediate dihydroxyacetone phosphate (DHAP) to sn-glycerol 3-phosphate (G3P), the key precursor for phospholipid synthesis. This Helicobacter pylori (strain HPAG1) protein is Glycerol-3-phosphate dehydrogenase [NAD(P)+].